A 291-amino-acid chain; its full sequence is 33 kDa chaperonin (291 aa).

Intrachain disulfides connect cysteine 237–cysteine 239 and cysteine 270–cysteine 273.

It belongs to the HSP33 family. Post-translationally, under oxidizing conditions two disulfide bonds are formed involving the reactive cysteines. Under reducing conditions zinc is bound to the reactive cysteines and the protein is inactive.

It is found in the cytoplasm. Its function is as follows. Redox regulated molecular chaperone. Protects both thermally unfolding and oxidatively damaged proteins from irreversible aggregation. Plays an important role in the bacterial defense system toward oxidative stress. This is 33 kDa chaperonin from Bacillus cytotoxicus (strain DSM 22905 / CIP 110041 / 391-98 / NVH 391-98).